A 642-amino-acid chain; its full sequence is LIM domain kinase 2 (642 aa).

LIM zinc-binding domains follow at residues 12-63 and 72-124; these read CLGC…CHKD and CHGC…CGKC. The PDZ domain occupies 152 to 239; that stretch reads LISMPAATDG…TLQLLIEHDP (88 aa). The disordered stretch occupies residues 282–304; it reads RSLRRSNSISKSPGPSSPKEPLL. Residues 286–304 are compositionally biased toward low complexity; sequence RSNSISKSPGPSSPKEPLL. Positions 331–608 constitute a Protein kinase domain; the sequence is LIHGEVLGKG…DSFEALSLYL (278 aa). ATP is bound by residues 337–345 and Lys360; that span reads LGKGFFGQA. Asp451 is an active-site residue. The residue at position 505 (Thr505) is a Phosphothreonine.

The protein belongs to the protein kinase superfamily. TKL Ser/Thr protein kinase family. As to quaternary structure, binds ROCK1 and LKAP. Expressed predominantly in the lung, and faintly in the kidney, liver, brain, spleen, gizzard, and intestine.

The protein localises to the cytoplasm. Its subcellular location is the cytoskeleton. It is found in the spindle. The protein resides in the microtubule organizing center. It localises to the centrosome. The enzyme catalyses L-seryl-[protein] + ATP = O-phospho-L-seryl-[protein] + ADP + H(+). It catalyses the reaction L-threonyl-[protein] + ATP = O-phospho-L-threonyl-[protein] + ADP + H(+). In terms of biological role, serine/threonine-protein kinase that plays an essential role in the regulation of actin filament dynamics. Acts downstream of several Rho family GTPase signal transduction pathways. Involved in astral microtubule organization and mitotic spindle orientation during early stages of mitosis by mediating phosphorylation of TPPP. The chain is LIM domain kinase 2 (LIMK2) from Gallus gallus (Chicken).